A 137-amino-acid chain; its full sequence is Glycine cleavage system H protein (137 aa).

Positions 36 to 118 (PAIIGITEYA…YGEGWLLKVE (83 aa)) constitute a Lipoyl-binding domain. Lysine 77 bears the N6-lipoyllysine mark.

Belongs to the GcvH family. In terms of assembly, the glycine cleavage system is composed of four proteins: P, T, L and H. The cofactor is (R)-lipoate.

In terms of biological role, the glycine cleavage system catalyzes the degradation of glycine. The H protein shuttles the methylamine group of glycine from the P protein to the T protein. The sequence is that of Glycine cleavage system H protein from Bifidobacterium longum (strain NCC 2705).